Here is a 257-residue protein sequence, read N- to C-terminus: MALVVKDDVKISEFINLSAAEKFLPAVMTSVKTVRISKVDKVIAMENDSLSDVDLLKGVKLVKDGYVCLAGLVVSGEWNLPDNCRGGVSVCLVDKRMQRDDEATLGSYRTSAAKKRFAFKLIPNYSITTADAERKVWQVLVNIRGVAMEKGFCPLSLEFVSVCIVHKSNIKLGLREKITSVSEGGPVELTEAVVDEFIESVPMADRLRKFRNQSKKGSNKYVGKRNDNKGLNKEGKLFDKVRIGQNSESSDAESSSF.

The disordered stretch occupies residues 212–257 (NQSKKGSNKYVGKRNDNKGLNKEGKLFDKVRIGQNSESSDAESSSF). Over residues 224–242 (KRNDNKGLNKEGKLFDKVR) the composition is skewed to basic and acidic residues. The segment covering 247–257 (SESSDAESSSF) has biased composition (low complexity).

The protein belongs to the tobamovirus movement protein family.

It localises to the host cytoplasm. The protein localises to the host cytoskeleton. It is found in the host cell junction. The protein resides in the host plasmodesma. In terms of biological role, transports viral genome to neighboring plant cells directly through plasmosdesmata, without any budding. The movement protein allows efficient cell to cell propagation, by bypassing the host cell wall barrier. Forms a ribonucleoprotein complex with viral RNA. Binds microtubules and modulates microtubule stability. Can bind double-stranded DNA. This chain is Movement protein (MP), found in Vicia faba (Broad bean).